The sequence spans 1710 residues: Chromodomain-helicase-DNA-binding protein 1 (1710 aa).

Positions 1 to 10 (MNGHSDEESV) are enriched in basic and acidic residues. Positions 1 to 252 (MNGHSDEESV…KEDEEMKTDS (252 aa)) are disordered. The span at 35–63 (SSGSSSDGSSSQSGSSDSDSGSESGSQSE) shows a compositional bias: low complexity. The span at 67 to 85 (DTSRENKVQAKPPKVDGAE) shows a compositional bias: basic and acidic residues. Residues 105 to 121 (QQQQQQQQQHQASSNSG) are compositionally biased toward low complexity. Residues 122 to 136 (SEEDSSSSEDSDDSS) are compositionally biased toward acidic residues. Residues 152-163 (SGSGSPSQSGSD) show a composition bias toward low complexity. Over residues 187-210 (KVKSRKPQNRSKSKNGKKILGQKK) the composition is skewed to basic residues. Ser215 and Ser216 each carry phosphoserine. The span at 215–226 (SSEEDDDEEDYD) shows a compositional bias: acidic residues. Thr237 is subject to Phosphothreonine. Ser241 is modified (phosphoserine). At Thr250 the chain carries Phosphothreonine. Position 252 is a phosphoserine (Ser252). Chromo domains are found at residues 272-364 (ETIE…RWLK) and 389-452 (QIVE…TPFK). Ser471 carries the post-translational modification Phosphoserine. A Helicase ATP-binding domain is found at 493–663 (AHSWCKGNSC…WSLLHFIMPE (171 aa)). Residue 506–513 (DEMGLGKT) coordinates ATP. A DEAH box motif is present at residues 614–617 (DEAH). Positions 792–943 (LLDKLLIRLR…HLVIQRMDTT (152 aa)) constitute a Helicase C-terminal domain. Phosphoserine occurs at positions 1025, 1040, 1081, 1085, 1096, 1098, 1100, and 1102. The tract at residues 1080–1120 (ISFNGSEGRRSRSRRYSGSDSDSISEGKRPKKRGRPRTIPR) is disordered. A compositionally biased stretch (basic residues) spans 1108–1117 (RPKKRGRPRT). Ser1161 carries the phosphoserine modification. 2 disordered regions span residues 1321 to 1408 (EALS…ESEE) and 1502 to 1710 (KKRQ…SRKT). Positions 1329-1345 (SKRRKARAKKNKAMKSI) are enriched in basic residues. Ser1353, Ser1355, Ser1356, Ser1360, Ser1363, Ser1371, and Ser1373 each carry phosphoserine. Residues 1370–1379 (LSESKSDGRE) are compositionally biased toward basic and acidic residues. Residues 1409 to 1511 (LDQKTFSICK…KKRQESQQNS (103 aa)) form a CHD1 helical C-terminal domain (CHCT) region. The segment covering 1507–1516 (SQQNSDQNSN) has biased composition (low complexity). Composition is skewed to basic and acidic residues over residues 1523 to 1573 (RNPD…DSRK) and 1582 to 1670 (GKDH…DHRA). Ser1622 carries the post-translational modification Phosphoserine. Tandem repeats lie at residues 1628–1632 (HSDHR), 1634–1638 (HSDHR), and 1640–1644 (HSDHR). Positions 1628-1644 (HSDHRSHSDHRLHSDHR) are 3 X 5 AA repeats of H-S-D-H-R. Residues Ser1677, Arg1688, and Ser1689 each carry the phosphoserine modification. Positions 1690-1701 (PFEHSVEHKSTP) are enriched in basic and acidic residues.

The protein belongs to the SNF2/RAD54 helicase family. In terms of assembly, component of the SAGA complex. Interacts with BCLAF1, NCoR, SRP20 and SAFB. Specifically interacts with methylated H3K4me2 and H3K4me3. Interacts with the FACT complex, the PAF complex and the U2 snRNP. Interacts directly with PAF1, SFA3A1, SFA3A2, SFA3A3, SNF2 and SSRP1. In terms of tissue distribution, expressed in many tissues including in the brain, where the highest level of expression is found in the cerebellum and basal ganglia.

Its subcellular location is the nucleus. It localises to the cytoplasm. It carries out the reaction ATP + H2O = ADP + phosphate + H(+). Its function is as follows. ATP-dependent chromatin-remodeling factor which functions as substrate recognition component of the transcription regulatory histone acetylation (HAT) complex SAGA. Regulates polymerase II transcription. Also required for efficient transcription by RNA polymerase I, and more specifically the polymerase I transcription termination step. Regulates negatively DNA replication. Not only involved in transcription-related chromatin-remodeling, but also required to maintain a specific chromatin configuration across the genome. Is also associated with histone deacetylase (HDAC) activity. Required for the bridging of SNF2, the FACT complex, the PAF complex as well as the U2 snRNP complex to H3K4me3. Functions to modulate the efficiency of pre-mRNA splicing in part through physical bridging of spliceosomal components to H3K4me3. Required for maintaining open chromatin and pluripotency in embryonic stem cells. This chain is Chromodomain-helicase-DNA-binding protein 1, found in Homo sapiens (Human).